The sequence spans 594 residues: Arginine--tRNA ligase (594 aa).

The short motif at 139 to 149 (ANPTGPLHVGH) is the 'HIGH' region element.

This sequence belongs to the class-I aminoacyl-tRNA synthetase family. In terms of assembly, monomer.

The protein resides in the cytoplasm. It catalyses the reaction tRNA(Arg) + L-arginine + ATP = L-arginyl-tRNA(Arg) + AMP + diphosphate. This Burkholderia mallei (strain NCTC 10247) protein is Arginine--tRNA ligase.